A 145-amino-acid polypeptide reads, in one-letter code: D-aminoacyl-tRNA deacylase (145 aa).

Residues 137 to 138 carry the Gly-cisPro motif, important for rejection of L-amino acids motif; the sequence is GP.

This sequence belongs to the DTD family. As to quaternary structure, homodimer.

The protein localises to the cytoplasm. The catalysed reaction is glycyl-tRNA(Ala) + H2O = tRNA(Ala) + glycine + H(+). It catalyses the reaction a D-aminoacyl-tRNA + H2O = a tRNA + a D-alpha-amino acid + H(+). Its function is as follows. An aminoacyl-tRNA editing enzyme that deacylates mischarged D-aminoacyl-tRNAs. Also deacylates mischarged glycyl-tRNA(Ala), protecting cells against glycine mischarging by AlaRS. Acts via tRNA-based rather than protein-based catalysis; rejects L-amino acids rather than detecting D-amino acids in the active site. By recycling D-aminoacyl-tRNA to D-amino acids and free tRNA molecules, this enzyme counteracts the toxicity associated with the formation of D-aminoacyl-tRNA entities in vivo and helps enforce protein L-homochirality. This is D-aminoacyl-tRNA deacylase from Pseudomonas savastanoi pv. phaseolicola (strain 1448A / Race 6) (Pseudomonas syringae pv. phaseolicola (strain 1448A / Race 6)).